We begin with the raw amino-acid sequence, 55 residues long: Large ribosomal subunit protein bL33 (55 aa).

Belongs to the bacterial ribosomal protein bL33 family.

This is Large ribosomal subunit protein bL33 from Mesorhizobium japonicum (strain LMG 29417 / CECT 9101 / MAFF 303099) (Mesorhizobium loti (strain MAFF 303099)).